The primary structure comprises 478 residues: Noelin-3 (478 aa).

Positions 1 to 23 (MSAPLLKLGAVLSTMAMISNWMS) are cleaved as a signal peptide. 5 N-linked (GlcNAc...) asparagine glycosylation sites follow: Asn-33, Asn-95, Asn-179, Asn-299, and Asn-465. A coiled-coil region spans residues 77–217 (CSRDAKSRQL…TRLRDCMKKL (141 aa)). The Olfactomedin-like domain maps to 218–470 (TCGKLMKITG…QVLFNVTLFH (253 aa)). A disulfide bond links Cys-219 and Cys-401.

As to quaternary structure, peripherally associated with AMPAR complex. AMPAR complex consists of an inner core made of 4 pore-forming GluA/GRIA proteins (GRIA1, GRIA2, GRIA3 and GRIA4) and 4 major auxiliary subunits arranged in a twofold symmetry. One of the two pairs of distinct binding sites is occupied either by CNIH2, CNIH3 or CACNG2, CACNG3. The other harbors CACNG2, CACNG3, CACNG4, CACNG8 or GSG1L. This inner core of AMPAR complex is complemented by outer core constituents binding directly to the GluA/GRIA proteins at sites distinct from the interaction sites of the inner core constituents. Outer core constituents include at least PRRT1, PRRT2, CKAMP44/SHISA9, FRRS1L and NRN1. The proteins of the inner and outer core serve as a platform for other, more peripherally associated AMPAR constituents, including OLFM3. Alone or in combination, these auxiliary subunits control the gating and pharmacology of the AMPAR complex and profoundly impact their biogenesis and protein processing. Homodimer. Interacts with MYOC. Interacts with OLFM2. As to expression, expressed in the brain (at protein level). Also expressed in the retina, mainly in the ganglion cell layer and in the amacrine cell subregion of the inner nuclear layer. Expressed at high levels in the epithelial cells of the posterior iris and the ciliary body and, at lower levels, in the trabecular meshwork. Isoform 2 preferentially expressed in retina and brain, while isoform 1 preferentially expressed in the tissues of the eye angle.

Its subcellular location is the secreted. The protein resides in the synapse. The polypeptide is Noelin-3 (Olfm3) (Rattus norvegicus (Rat)).